Here is a 209-residue protein sequence, read N- to C-terminus: MGAILGKKIGMTRLYNNKREAVPCTVIQAGPCFVAQVKSTEKDGYDAYQLGFGERDEKKVTKPLAGHYKKAGKTPGYLLSEVSKSLIAGELEAGATVAVDVFTEGEIVDVLGVTKGKGFAGVVKRHNFGGGSRTHGQSDRLRAPGSVGGSSDPSRTFKGTRMAGRMGGENKTVRNLEIVKVMPESNLIVVKGAVPGPKNSYVKIVSTTK.

Positions 128–166 (FGGGSRTHGQSDRLRAPGSVGGSSDPSRTFKGTRMAGRM) are disordered.

Belongs to the universal ribosomal protein uL3 family. As to quaternary structure, part of the 50S ribosomal subunit. Forms a cluster with proteins L14 and L19.

In terms of biological role, one of the primary rRNA binding proteins, it binds directly near the 3'-end of the 23S rRNA, where it nucleates assembly of the 50S subunit. The polypeptide is Large ribosomal subunit protein uL3 (Chlorobaculum parvum (strain DSM 263 / NCIMB 8327) (Chlorobium vibrioforme subsp. thiosulfatophilum)).